Consider the following 1433-residue polypeptide: Gag-Pol polyprotein (1433 aa).

G2 carries the N-myristoyl glycine; by host lipid modification. The tract at residues 7-31 is interaction with Gp41; sequence VLTGGKLDAWEKIRLRPGGRKSYKI. The segment at 8–43 is interaction with host CALM1; sequence LTGGKLDAWEKIRLRPGGRKSYKIKHLVWASRELER. The interaction with host AP3D1 stretch occupies residues 12 to 19; the sequence is KLDAWEKI. The interval 14–33 is interaction with membrane phosphatidylinositol 4,5-bisphosphate and RNA; sequence DAWEKIRLRPGGRKSYKIKH. A Nuclear export signal motif is present at residues 16 to 22; sequence WEKIRLR. Positions 26-32 match the Nuclear localization signal motif; sequence RKSYKIK. The segment at 73-77 is interaction with membrane phosphatidylinositol 4,5-bisphosphate; that stretch reads EEIKS. Phosphotyrosine; by host is present on Y132. An interaction with human PPIA/CYPA and NUP153 region spans residues 189 to 227; that stretch reads NTVGGHQAAMQMLKDTINEEAAEWDRMHPQQAGPFPPGQ. The segment at 277 to 363 is dimerization/Multimerization of capsid protein p24; sequence YSPVSILDIR…GGPSHKARVL (87 aa). CCHC-type zinc fingers lie at residues 391-408 and 412-429; these read IKCF…NCRA and KGCW…DCTE. Residues 445 to 455 show a composition bias toward basic and acidic residues; sequence EAREFSSEQDR. The segment at 445–481 is disordered; the sequence is EAREFSSEQDRTNSPTCRKPRVRRGDSPLPEAGDEGK. A dimerization of protease region spans residues 487–491; that stretch reads PQITL. Positions 506-575 constitute a Peptidase A2 domain; the sequence is IEALLDTGAD…TPINIIGRNM (70 aa). The For protease activity; shared with dimeric partner role is filled by D511. 2 dimerization of protease regions span residues 535–541 and 574–586; these read GIGGFIK and NMLT…LNFP. The 191-residue stretch at 629–819 folds into the Reverse transcriptase domain; the sequence is EGKISKIGPE…PPFLWMGYEL (191 aa). Positions 695, 770, and 771 each coordinate Mg(2+). The RT 'primer grip' stretch occupies residues 812-820; that stretch reads FLWMGYELH. The short motif at 983–999 is the Tryptophan repeat motif element; it reads WEIWWTDYWQATWIPEW. An RNase H type-1 domain is found at 1019–1142; that stretch reads IPGAETYYVD…VDKLVSSGIR (124 aa). Residues D1028, E1063, D1083, and D1134 each coordinate Mg(2+). The segment at 1148–1189 adopts an Integrase-type zinc-finger fold; sequence DGIDKAQEEHERYHNNWRAMASDFNLPPIVAKEIVASCDKCQ. Residues H1157, H1161, C1185, and C1188 each contribute to the Zn(2+) site. In terms of domain architecture, Integrase catalytic spans 1199-1349; it reads VDCSPGIWQL…SAGERIIDII (151 aa). 3 residues coordinate Mg(2+): D1209, D1261, and E1297. Residues 1368-1415 constitute a DNA-binding region (integrase-type); the sequence is FRVYYRDSRDPVWKGPAKLLWKGEGAVVIQDNNEIKVVPRRKAKIIRD.

Homotrimer; further assembles as hexamers of trimers. Interacts with gp41 (via C-terminus). Interacts with host CALM1; this interaction induces a conformational change in the Matrix protein, triggering exposure of the myristate group. Interacts with host AP3D1; this interaction allows the polyprotein trafficking to multivesicular bodies during virus assembly. Part of the pre-integration complex (PIC) which is composed of viral genome, matrix protein, Vpr and integrase. As to quaternary structure, homodimer; the homodimer further multimerizes as homohexamers or homopentamers. Interacts with human PPIA/CYPA; This interaction stabilizes the capsid. Interacts with human NUP153. Interacts with host PDZD8; this interaction stabilizes the capsid. Interacts with monkey TRIM5; this interaction destabilizes the capsid. In terms of assembly, homodimer, whose active site consists of two apposed aspartic acid residues. Heterodimer of p66 RT and p51 RT (RT p66/p51). Heterodimerization of RT is essential for DNA polymerase activity. The overall folding of the subdomains is similar in p66 RT and p51 RT but the spatial arrangements of the subdomains are dramatically different. As to quaternary structure, homotetramer; may further associate as a homohexadecamer. Part of the pre-integration complex (PIC) which is composed of viral genome, matrix protein, Vpr and integrase. Interacts with human SMARCB1/INI1 and human PSIP1/LEDGF isoform 1. Interacts with human KPNA3; this interaction might play a role in nuclear import of the pre-integration complex. Interacts with human NUP153; this interaction might play a role in nuclear import of the pre-integration complex. Requires Mg(2+) as cofactor. Specific enzymatic cleavages by the viral protease yield mature proteins. The protease is released by autocatalytic cleavage. The polyprotein is cleaved during and after budding, this process is termed maturation. Proteolytic cleavage of p66 RT removes the RNase H domain to yield the p51 RT subunit. Nucleocapsid protein p7 might be further cleaved after virus entry. Post-translationally, tyrosine phosphorylated presumably in the virion by a host kinase. Phosphorylation is apparently not a major regulator of membrane association. In terms of processing, phosphorylated possibly by host MAPK1; this phosphorylation is necessary for Pin1-mediated virion uncoating. Methylated by host PRMT6, impairing its function by reducing RNA annealing and the initiation of reverse transcription.

Its subcellular location is the host cell membrane. It localises to the host endosome. The protein localises to the host multivesicular body. The protein resides in the virion membrane. It is found in the host nucleus. Its subcellular location is the host cytoplasm. It localises to the virion. The enzyme catalyses Specific for a P1 residue that is hydrophobic, and P1' variable, but often Pro.. It catalyses the reaction Endohydrolysis of RNA in RNA/DNA hybrids. Three different cleavage modes: 1. sequence-specific internal cleavage of RNA. Human immunodeficiency virus type 1 and Moloney murine leukemia virus enzymes prefer to cleave the RNA strand one nucleotide away from the RNA-DNA junction. 2. RNA 5'-end directed cleavage 13-19 nucleotides from the RNA end. 3. DNA 3'-end directed cleavage 15-20 nucleotides away from the primer terminus.. It carries out the reaction 3'-end directed exonucleolytic cleavage of viral RNA-DNA hybrid.. The catalysed reaction is DNA(n) + a 2'-deoxyribonucleoside 5'-triphosphate = DNA(n+1) + diphosphate. Protease: The viral protease is inhibited by many synthetic protease inhibitors (PIs), such as amprenavir, atazanavir, indinavir, loprinavir, nelfinavir, ritonavir and saquinavir. Use of protease inhibitors in tritherapy regimens permit more ambitious therapeutic strategies. Reverse transcriptase/ribonuclease H: RT can be inhibited either by nucleoside RT inhibitors (NRTIs) or by non nucleoside RT inhibitors (NNRTIs). NRTIs act as chain terminators, whereas NNRTIs inhibit DNA polymerization by binding a small hydrophobic pocket near the RT active site and inducing an allosteric change in this region. Classical NRTIs are abacavir, adefovir (PMEA), didanosine (ddI), lamivudine (3TC), stavudine (d4T), tenofovir (PMPA), zalcitabine (ddC), and zidovudine (AZT). Classical NNRTIs are atevirdine (BHAP U-87201E), delavirdine, efavirenz (DMP-266), emivirine (I-EBU), and nevirapine (BI-RG-587). The tritherapies used as a basic effective treatment of AIDS associate two NRTIs and one NNRTI. Its function is as follows. Mediates, with Gag polyprotein, the essential events in virion assembly, including binding the plasma membrane, making the protein-protein interactions necessary to create spherical particles, recruiting the viral Env proteins, and packaging the genomic RNA via direct interactions with the RNA packaging sequence (Psi). Gag-Pol polyprotein may regulate its own translation, by the binding genomic RNA in the 5'-UTR. At low concentration, the polyprotein would promote translation, whereas at high concentration, the polyprotein would encapsidate genomic RNA and then shut off translation. Functionally, targets the polyprotein to the plasma membrane via a multipartite membrane-binding signal, that includes its myristoylated N-terminus. Matrix protein is part of the pre-integration complex. Implicated in the release from host cell mediated by Vpu. Binds to RNA. Forms the conical core that encapsulates the genomic RNA-nucleocapsid complex in the virion. Most core are conical, with only 7% tubular. The core is constituted by capsid protein hexamer subunits. The core is disassembled soon after virion entry. Host restriction factors such as TRIM5-alpha or TRIMCyp bind retroviral capsids and cause premature capsid disassembly, leading to blocks in reverse transcription. Capsid restriction by TRIM5 is one of the factors which restricts HIV-1 to the human species. Host PIN1 apparently facilitates the virion uncoating. On the other hand, interactions with PDZD8 or CYPA stabilize the capsid. In terms of biological role, encapsulates and protects viral dimeric unspliced genomic RNA (gRNA). Binds these RNAs through its zinc fingers. Acts as a nucleic acid chaperone which is involved in rearangement of nucleic acid secondary structure during gRNA retrotranscription. Also facilitates template switch leading to recombination. As part of the polyprotein, participates in gRNA dimerization, packaging, tRNA incorporation and virion assembly. Its function is as follows. Aspartyl protease that mediates proteolytic cleavages of Gag and Gag-Pol polyproteins during or shortly after the release of the virion from the plasma membrane. Cleavages take place as an ordered, step-wise cascade to yield mature proteins. This process is called maturation. Displays maximal activity during the budding process just prior to particle release from the cell. Also cleaves Nef and Vif, probably concomitantly with viral structural proteins on maturation of virus particles. Hydrolyzes host EIF4GI and PABP1 in order to shut off the capped cellular mRNA translation. The resulting inhibition of cellular protein synthesis serves to ensure maximal viral gene expression and to evade host immune response. Also mediates cleavage of host YTHDF3. Mediates cleavage of host CARD8, thereby activating the CARD8 inflammasome, leading to the clearance of latent HIV-1 in patient CD4(+) T-cells after viral reactivation; in contrast, HIV-1 can evade CARD8-sensing when its protease remains inactive in infected cells prior to viral budding. Functionally, multifunctional enzyme that converts the viral RNA genome into dsDNA in the cytoplasm, shortly after virus entry into the cell. This enzyme displays a DNA polymerase activity that can copy either DNA or RNA templates, and a ribonuclease H (RNase H) activity that cleaves the RNA strand of RNA-DNA heteroduplexes in a partially processive 3' to 5' endonucleasic mode. Conversion of viral genomic RNA into dsDNA requires many steps. A tRNA(3)-Lys binds to the primer-binding site (PBS) situated at the 5'-end of the viral RNA. RT uses the 3' end of the tRNA primer to perform a short round of RNA-dependent minus-strand DNA synthesis. The reading proceeds through the U5 region and ends after the repeated (R) region which is present at both ends of viral RNA. The portion of the RNA-DNA heteroduplex is digested by the RNase H, resulting in a ssDNA product attached to the tRNA primer. This ssDNA/tRNA hybridizes with the identical R region situated at the 3' end of viral RNA. This template exchange, known as minus-strand DNA strong stop transfer, can be either intra- or intermolecular. RT uses the 3' end of this newly synthesized short ssDNA to perform the RNA-dependent minus-strand DNA synthesis of the whole template. RNase H digests the RNA template except for two polypurine tracts (PPTs) situated at the 5'-end and near the center of the genome. It is not clear if both polymerase and RNase H activities are simultaneous. RNase H probably can proceed both in a polymerase-dependent (RNA cut into small fragments by the same RT performing DNA synthesis) and a polymerase-independent mode (cleavage of remaining RNA fragments by free RTs). Secondly, RT performs DNA-directed plus-strand DNA synthesis using the PPTs that have not been removed by RNase H as primers. PPTs and tRNA primers are then removed by RNase H. The 3' and 5' ssDNA PBS regions hybridize to form a circular dsDNA intermediate. Strand displacement synthesis by RT to the PBS and PPT ends produces a blunt ended, linear dsDNA copy of the viral genome that includes long terminal repeats (LTRs) at both ends. Catalyzes viral DNA integration into the host chromosome, by performing a series of DNA cutting and joining reactions. This enzyme activity takes place after virion entry into a cell and reverse transcription of the RNA genome in dsDNA. The first step in the integration process is 3' processing. This step requires a complex comprising the viral genome, matrix protein, Vpr and integrase. This complex is called the pre-integration complex (PIC). The integrase protein removes 2 nucleotides from each 3' end of the viral DNA, leaving recessed CA OH's at the 3' ends. In the second step, the PIC enters cell nucleus. This process is mediated through integrase and Vpr proteins, and allows the virus to infect a non dividing cell. This ability to enter the nucleus is specific of lentiviruses, other retroviruses cannot and rely on cell division to access cell chromosomes. In the third step, termed strand transfer, the integrase protein joins the previously processed 3' ends to the 5' ends of strands of target cellular DNA at the site of integration. The 5'-ends are produced by integrase-catalyzed staggered cuts, 5 bp apart. A Y-shaped, gapped, recombination intermediate results, with the 5'-ends of the viral DNA strands and the 3' ends of target DNA strands remaining unjoined, flanking a gap of 5 bp. The last step is viral DNA integration into host chromosome. This involves host DNA repair synthesis in which the 5 bp gaps between the unjoined strands are filled in and then ligated. Since this process occurs at both cuts flanking the HIV genome, a 5 bp duplication of host DNA is produced at the ends of HIV-1 integration. Alternatively, Integrase may catalyze the excision of viral DNA just after strand transfer, this is termed disintegration. The polypeptide is Gag-Pol polyprotein (gag-pol) (Human immunodeficiency virus type 1 group M subtype G (isolate SE6165) (HIV-1)).